A 243-amino-acid chain; its full sequence is MPIDIGKLGTTSTSAQSQSTFLFECSEPVPFEMAWLWQQQWQQQLFANPLAPQAVWLLQHQACYTLGRGASEANLLFDVNNPPAALHRIDRGGEVTHHLPGQLVVYPVLDLRRYQTDLHWYLRQLEQVLIDVLAVLGLAGERLQGLTGLWLEGRKVAAIGVGCRRWITQHGLALNVDCDLESFSAVVPCGLVGHPVGRLNQWIPGLTMAEVQPLMRQSLSDRFGLVWQIPEPLAKPGAFASDA.

A BPL/LPL catalytic domain is found at 49–227 (PLAPQAVWLL…SLSDRFGLVW (179 aa)). Substrate-binding positions include 91–98 (RGGEVTHH), 158–160 (AIG), and 171–173 (GLA). The active-site Acyl-thioester intermediate is the cysteine 189.

It belongs to the LipB family.

The protein resides in the cytoplasm. The enzyme catalyses octanoyl-[ACP] + L-lysyl-[protein] = N(6)-octanoyl-L-lysyl-[protein] + holo-[ACP] + H(+). The protein operates within protein modification; protein lipoylation via endogenous pathway; protein N(6)-(lipoyl)lysine from octanoyl-[acyl-carrier-protein]: step 1/2. In terms of biological role, catalyzes the transfer of endogenously produced octanoic acid from octanoyl-acyl-carrier-protein onto the lipoyl domains of lipoate-dependent enzymes. Lipoyl-ACP can also act as a substrate although octanoyl-ACP is likely to be the physiological substrate. This Prochlorococcus marinus (strain MIT 9313) protein is Octanoyltransferase.